The following is a 249-amino-acid chain: 3-deoxy-manno-octulosonate cytidylyltransferase (249 aa).

Belongs to the KdsB family.

It is found in the cytoplasm. The enzyme catalyses 3-deoxy-alpha-D-manno-oct-2-ulosonate + CTP = CMP-3-deoxy-beta-D-manno-octulosonate + diphosphate. The protein operates within nucleotide-sugar biosynthesis; CMP-3-deoxy-D-manno-octulosonate biosynthesis; CMP-3-deoxy-D-manno-octulosonate from 3-deoxy-D-manno-octulosonate and CTP: step 1/1. Its pathway is bacterial outer membrane biogenesis; lipopolysaccharide biosynthesis. In terms of biological role, activates KDO (a required 8-carbon sugar) for incorporation into bacterial lipopolysaccharide in Gram-negative bacteria. The sequence is that of 3-deoxy-manno-octulosonate cytidylyltransferase from Photorhabdus laumondii subsp. laumondii (strain DSM 15139 / CIP 105565 / TT01) (Photorhabdus luminescens subsp. laumondii).